Here is a 257-residue protein sequence, read N- to C-terminus: Thiazole synthase (257 aa).

Lysine 96 acts as the Schiff-base intermediate with DXP in catalysis. Residues glycine 157, 184–185 (AG), and 206–207 (NT) contribute to the 1-deoxy-D-xylulose 5-phosphate site.

The protein belongs to the ThiG family. In terms of assembly, homotetramer. Forms heterodimers with either ThiH or ThiS.

It localises to the cytoplasm. The catalysed reaction is [ThiS sulfur-carrier protein]-C-terminal-Gly-aminoethanethioate + 2-iminoacetate + 1-deoxy-D-xylulose 5-phosphate = [ThiS sulfur-carrier protein]-C-terminal Gly-Gly + 2-[(2R,5Z)-2-carboxy-4-methylthiazol-5(2H)-ylidene]ethyl phosphate + 2 H2O + H(+). It participates in cofactor biosynthesis; thiamine diphosphate biosynthesis. Functionally, catalyzes the rearrangement of 1-deoxy-D-xylulose 5-phosphate (DXP) to produce the thiazole phosphate moiety of thiamine. Sulfur is provided by the thiocarboxylate moiety of the carrier protein ThiS. In vitro, sulfur can be provided by H(2)S. In Bartonella quintana (strain Toulouse) (Rochalimaea quintana), this protein is Thiazole synthase.